Reading from the N-terminus, the 330-residue chain is Ribosomal RNA small subunit methyltransferase H (330 aa).

Residues 40–42, Asp-58, Phe-85, Asp-101, and Gln-108 contribute to the S-adenosyl-L-methionine site; that span reads GGY.

Belongs to the methyltransferase superfamily. RsmH family.

The protein resides in the cytoplasm. It carries out the reaction cytidine(1402) in 16S rRNA + S-adenosyl-L-methionine = N(4)-methylcytidine(1402) in 16S rRNA + S-adenosyl-L-homocysteine + H(+). Functionally, specifically methylates the N4 position of cytidine in position 1402 (C1402) of 16S rRNA. The sequence is that of Ribosomal RNA small subunit methyltransferase H from Roseobacter denitrificans (strain ATCC 33942 / OCh 114) (Erythrobacter sp. (strain OCh 114)).